The following is a 203-amino-acid chain: Non-histone protein 10 (203 aa).

An N-acetylserine modification is found at serine 2. 2 disordered regions span residues 78-97 (KSKT…PKRP) and 161-203 (ISNI…VSSN). A DNA-binding region (HMG box) is located at residues 94-158 (PKRPTNAYLL…RYQMEMEIYN (65 aa)).

Component of the chromatin-remodeling INO80 complex, at least composed of ARP4, ARP5, ARP8, RVB1, RVB2, TAF14, NHP10, IES1, IES3, IES4, IES6, ACT1, IES2, IES5 and INO80.

Its subcellular location is the nucleus. Probably involved in transcription regulation via its interaction with the INO80 complex, a chromatin remodeling complex. This is Non-histone protein 10 (NHP10) from Saccharomyces cerevisiae (strain ATCC 204508 / S288c) (Baker's yeast).